Reading from the N-terminus, the 341-residue chain is Anthranilate phosphoribosyltransferase (341 aa).

Residues Gly-82, 85–86 (GD), Thr-90, 92–95 (NIST), 110–118 (KHGNRAITS), and Thr-122 each bind 5-phospho-alpha-D-ribose 1-diphosphate. Gly-82 provides a ligand contact to anthranilate. Mg(2+) is bound at residue Ser-94. Asn-113 contacts anthranilate. Arg-168 serves as a coordination point for anthranilate. Asp-226 and Glu-227 together coordinate Mg(2+).

Belongs to the anthranilate phosphoribosyltransferase family. Homodimer. Requires Mg(2+) as cofactor.

The catalysed reaction is N-(5-phospho-beta-D-ribosyl)anthranilate + diphosphate = 5-phospho-alpha-D-ribose 1-diphosphate + anthranilate. It participates in amino-acid biosynthesis; L-tryptophan biosynthesis; L-tryptophan from chorismate: step 2/5. Its function is as follows. Catalyzes the transfer of the phosphoribosyl group of 5-phosphorylribose-1-pyrophosphate (PRPP) to anthranilate to yield N-(5'-phosphoribosyl)-anthranilate (PRA). The protein is Anthranilate phosphoribosyltransferase of Caulobacter vibrioides (strain ATCC 19089 / CIP 103742 / CB 15) (Caulobacter crescentus).